Reading from the N-terminus, the 79-residue chain is Exodeoxyribonuclease 7 small subunit (79 aa).

This sequence belongs to the XseB family. As to quaternary structure, heterooligomer composed of large and small subunits.

It localises to the cytoplasm. It carries out the reaction Exonucleolytic cleavage in either 5'- to 3'- or 3'- to 5'-direction to yield nucleoside 5'-phosphates.. Functionally, bidirectionally degrades single-stranded DNA into large acid-insoluble oligonucleotides, which are then degraded further into small acid-soluble oligonucleotides. This Lactococcus lactis subsp. cremoris (strain SK11) protein is Exodeoxyribonuclease 7 small subunit.